The sequence spans 529 residues: Glucose-6-phosphate isomerase (529 aa).

The active-site Proton donor is the Glu322. Active-site residues include His351 and Lys455.

It belongs to the GPI family.

It localises to the cytoplasm. The catalysed reaction is alpha-D-glucose 6-phosphate = beta-D-fructose 6-phosphate. It functions in the pathway carbohydrate biosynthesis; gluconeogenesis. The protein operates within carbohydrate degradation; glycolysis; D-glyceraldehyde 3-phosphate and glycerone phosphate from D-glucose: step 2/4. Its function is as follows. Catalyzes the reversible isomerization of glucose-6-phosphate to fructose-6-phosphate. The polypeptide is Glucose-6-phosphate isomerase (Cyanothece sp. (strain PCC 7425 / ATCC 29141)).